Consider the following 55-residue polypeptide: Large ribosomal subunit protein eL40 (55 aa).

It belongs to the eukaryotic ribosomal protein eL40 family.

This chain is Large ribosomal subunit protein eL40, found in Ignicoccus hospitalis (strain KIN4/I / DSM 18386 / JCM 14125).